The chain runs to 561 residues: Putative transport protein DNO_0009 (561 aa).

5 consecutive transmembrane segments (helical) span residues 4–24 (VAIT…LGNI), 29–49 (VGLS…IMNL), 74–94 (FGLI…FFAS), 104–124 (AFAA…YYLF), and 166–186 (MGYA…MWLI). 2 RCK C-terminal domains span residues 198 to 283 (LQFF…ILGE) and 285 to 369 (AGHE…LIGN). Transmembrane regions (helical) follow at residues 379–399 (MLPV…PIYL), 411–433 (AGGP…LYWF), 447–467 (IVLF…STLL), 472–492 (FSWI…AGII), 501–521 (YLTI…LAFA), and 538–558 (VYPL…VLLW).

The protein belongs to the AAE transporter (TC 2.A.81) family. YidE subfamily.

The protein resides in the cell membrane. In Dichelobacter nodosus (strain VCS1703A), this protein is Putative transport protein DNO_0009.